Reading from the N-terminus, the 150-residue chain is MIDLTLQRASTSAVPDSAAFRLWAEAALEKPHAEVVIRIVDREESAALNSTYRGKTGPTNVLSFPFVVPEGVPNDLLGDLVICAPVVEREAAEQGKPVEAHWAHMVVHGMLHLQGYDHIEEAEAEIMENREIAILRGLGMENPYREIRPE.

Zn(2+) is bound by residues H108, H112, and H118.

Belongs to the endoribonuclease YbeY family. Requires Zn(2+) as cofactor.

The protein localises to the cytoplasm. In terms of biological role, single strand-specific metallo-endoribonuclease involved in late-stage 70S ribosome quality control and in maturation of the 3' terminus of the 16S rRNA. This is Endoribonuclease YbeY from Methylococcus capsulatus (strain ATCC 33009 / NCIMB 11132 / Bath).